The chain runs to 78 residues: LYR motif-containing protein 9 (78 aa).

Belongs to the complex I LYR family. LYRM9 subfamily.

The sequence is that of LYR motif-containing protein 9 (Lyrm9) from Mus musculus (Mouse).